A 449-amino-acid chain; its full sequence is UDP-N-acetylmuramoylalanine--D-glutamate ligase (449 aa).

Position 117–123 (117–123 (GSNGKTT)) interacts with ATP.

It belongs to the MurCDEF family.

Its subcellular location is the cytoplasm. It catalyses the reaction UDP-N-acetyl-alpha-D-muramoyl-L-alanine + D-glutamate + ATP = UDP-N-acetyl-alpha-D-muramoyl-L-alanyl-D-glutamate + ADP + phosphate + H(+). It functions in the pathway cell wall biogenesis; peptidoglycan biosynthesis. Functionally, cell wall formation. Catalyzes the addition of glutamate to the nucleotide precursor UDP-N-acetylmuramoyl-L-alanine (UMA). In Exiguobacterium sibiricum (strain DSM 17290 / CCUG 55495 / CIP 109462 / JCM 13490 / 255-15), this protein is UDP-N-acetylmuramoylalanine--D-glutamate ligase.